The primary structure comprises 478 residues: uncharacterized protein (478 aa).

The 193-residue stretch at 174–366 folds into the ATP-grasp domain; that stretch reads RQVLAAAGVP…LIGEHIKLAI (193 aa). Residue 214-219 participates in ATP binding; it reads GSGSRG. Arg-339 is an active-site residue.

This is an uncharacterized protein from Sinorhizobium fredii (strain NBRC 101917 / NGR234).